A 334-amino-acid polypeptide reads, in one-letter code: Transcription factor TGA2.1 (334 aa).

Polar residues predominate over residues 1 to 13; the sequence is MADASSRTDTSIV. The disordered stretch occupies residues 1-49; it reads MADASSRTDTSIVVDNDDKNHQLENGHSGAVMASNSSDRSDRSDKLMDQ. Residues 38-49 are compositionally biased toward basic and acidic residues; it reads DRSDRSDKLMDQ. The 45-residue stretch at 48 to 92 folds into the bZIP domain; the sequence is DQKTIRRLAQNREAARKSRLRKKAYVQQLESSKLKLAQLEQELQK. A basic motif region spans residues 50–70; sequence KTIRRLAQNREAARKSRLRKK. A leucine-zipper region spans residues 76–90; the sequence is LESSKLKLAQLEQEL. In terms of domain architecture, DOG1 spans 115–331; the sequence is ALTFDLEYTR…RALSSLWLAR (217 aa).

The protein belongs to the bZIP family. As to quaternary structure, interacts with NPR1/NH1 and NPR3/NH3.

It localises to the nucleus. Its function is as follows. Plays a negative role in rice basal defense responses to the bacterial blight pathogen Xanthomomas oryzae pv. oryzae (Xoo). May function in both positive and negative regulation of rice defense genes. Binds DNA in vitro. Acts as a transcriptional activator when bound to NPR1/NH1 in vitro. Binds to the promoter sequence of CRK10 in vitro. The chain is Transcription factor TGA2.1 from Oryza sativa subsp. japonica (Rice).